Here is a 353-residue protein sequence, read N- to C-terminus: A-kinase anchor protein 7 isoforms delta and gamma (353 aa).

2 stretches are compositionally biased toward basic and acidic residues: residues 1 to 22 and 66 to 76; these read MERP…RGEE and RSKENRGDRND. Disordered stretches follow at residues 1-33 and 47-85; these read MERP…SPVG and DDCG…KKAK. AMP-binding positions include Thr134 and 224-226; that span reads HLT. CMP contacts are provided by residues Thr134 and 224–226; that span reads HLT. Residues 299–353 are PKA-RII-alpha subunit binding domain; sequence AELVRLSKRLVENAVLKAVQQYLEETQNKKQPGEGNSVKAEEGDRNGDGSDNNRK. The segment at 300-324 is RI-alpha-binding; sequence ELVRLSKRLVENAVLKAVQQYLEET. The tract at residues 301–314 is RII-binding; it reads LVRLSKRLVENAVL. Residues 321-353 are disordered; it reads LEETQNKKQPGEGNSVKAEEGDRNGDGSDNNRK. Residues 337 to 353 are compositionally biased toward basic and acidic residues; the sequence is KAEEGDRNGDGSDNNRK.

As to quaternary structure, binds cAMP-dependent protein kinase (PKA). Interacts with PRKCA; only the cytoplasmic form is capable of interacting with PRKCA. As to expression, expressed highly in the heart, and moderately in brain, lung, liver, kidney and testis. Hardly detectable in spleen and skeletal muscle. In kidney, isoform Delta is expressed in the principal cells of the IMCD.

It localises to the nucleus. The protein localises to the cytoplasm. It is found in the cell membrane. Probably targets cAMP-dependent protein kinase (PKA) to the cellular membrane or cytoskeletal structures. The membrane-associated form reduces epithelial sodium channel (ENaC) activity, whereas the free cytoplasmic form may negatively regulate ENaC channel feedback inhibition by intracellular sodium. Isoform Delta may be involved in shuttling aquaporin-2 (AQP2) to the plasma membrane. The chain is A-kinase anchor protein 7 isoforms delta and gamma from Rattus norvegicus (Rat).